We begin with the raw amino-acid sequence, 61 residues long: Small ribosomal subunit protein uS14 (61 aa).

Residues C24, C27, C40, and C43 each contribute to the Zn(2+) site.

The protein belongs to the universal ribosomal protein uS14 family. Zinc-binding uS14 subfamily. In terms of assembly, part of the 30S ribosomal subunit. Contacts proteins S3 and S10. It depends on Zn(2+) as a cofactor.

Its function is as follows. Binds 16S rRNA, required for the assembly of 30S particles and may also be responsible for determining the conformation of the 16S rRNA at the A site. This chain is Small ribosomal subunit protein uS14, found in Rhodopirellula baltica (strain DSM 10527 / NCIMB 13988 / SH1).